Consider the following 337-residue polypeptide: Holliday junction branch migration complex subunit RuvB (337 aa).

The large ATPase domain (RuvB-L) stretch occupies residues 1 to 179; it reads MTHQVSVLHQ…FSFTGRVAYY (179 aa). ATP contacts are provided by residues Leu18, Arg19, Gly60, Lys63, Thr64, Ser65, 126–128, Arg169, Tyr179, and Arg216; that span reads EDY. A Mg(2+)-binding site is contributed by Thr64. Residues 180–250 form a small ATPAse domain (RuvB-S) region; it reads SDEDLATILR…VAEKALAMLL (71 aa). The tract at residues 253–337 is head domain (RuvB-H); sequence EWGLNEIDIK…DNLQSLGEEK (85 aa). DNA contacts are provided by Lys308 and Arg313.

The protein belongs to the RuvB family. In terms of assembly, homohexamer. Forms an RuvA(8)-RuvB(12)-Holliday junction (HJ) complex. HJ DNA is sandwiched between 2 RuvA tetramers; dsDNA enters through RuvA and exits via RuvB. An RuvB hexamer assembles on each DNA strand where it exits the tetramer. Each RuvB hexamer is contacted by two RuvA subunits (via domain III) on 2 adjacent RuvB subunits; this complex drives branch migration. In the full resolvosome a probable DNA-RuvA(4)-RuvB(12)-RuvC(2) complex forms which resolves the HJ.

The protein localises to the cytoplasm. It carries out the reaction ATP + H2O = ADP + phosphate + H(+). In terms of biological role, the RuvA-RuvB-RuvC complex processes Holliday junction (HJ) DNA during genetic recombination and DNA repair, while the RuvA-RuvB complex plays an important role in the rescue of blocked DNA replication forks via replication fork reversal (RFR). RuvA specifically binds to HJ cruciform DNA, conferring on it an open structure. The RuvB hexamer acts as an ATP-dependent pump, pulling dsDNA into and through the RuvAB complex. RuvB forms 2 homohexamers on either side of HJ DNA bound by 1 or 2 RuvA tetramers; 4 subunits per hexamer contact DNA at a time. Coordinated motions by a converter formed by DNA-disengaged RuvB subunits stimulates ATP hydrolysis and nucleotide exchange. Immobilization of the converter enables RuvB to convert the ATP-contained energy into a lever motion, pulling 2 nucleotides of DNA out of the RuvA tetramer per ATP hydrolyzed, thus driving DNA branch migration. The RuvB motors rotate together with the DNA substrate, which together with the progressing nucleotide cycle form the mechanistic basis for DNA recombination by continuous HJ branch migration. Branch migration allows RuvC to scan DNA until it finds its consensus sequence, where it cleaves and resolves cruciform DNA. The chain is Holliday junction branch migration complex subunit RuvB from Chlamydia abortus (strain DSM 27085 / S26/3) (Chlamydophila abortus).